Consider the following 485-residue polypeptide: uncharacterized protein (485 aa).

11 helical membrane-spanning segments follow: residues 79–99 (LVTL…LIFA), 117–137 (VFAL…FLVF), 139–159 (FFSG…LADL), 170–190 (VIYF…SGFI), 199–219 (WEFW…FLLL), 275–295 (ILIC…LVLI), 313–333 (GLMY…AMPI), 355–375 (LPMG…FGWT), 380–400 (IFWF…IMTS), 421–441 (GVKI…ESLF), and 448–468 (WGCT…PILF).

This sequence belongs to the major facilitator superfamily. CAR1 family.

It localises to the membrane. This is an uncharacterized protein from Schizosaccharomyces pombe (strain 972 / ATCC 24843) (Fission yeast).